Here is a 118-residue protein sequence, read N- to C-terminus: Large ribosomal subunit protein bL19 (118 aa).

Belongs to the bacterial ribosomal protein bL19 family.

Its function is as follows. This protein is located at the 30S-50S ribosomal subunit interface and may play a role in the structure and function of the aminoacyl-tRNA binding site. This is Large ribosomal subunit protein bL19 from Helicobacter hepaticus (strain ATCC 51449 / 3B1).